The chain runs to 388 residues: Nocturnin (388 aa).

E152 lines the Mg(2+) pocket. Substrate contacts are provided by residues E152, 176–178 (KPW), N220, 243–246 (HLKA), 281–283 (DFN), and H371.

Belongs to the CCR4/nocturin family. Mg(2+) is required as a cofactor. As to expression, expressed only in the photoreceptors of the retina. Expression is controlled by the retinal circadian clock.

It localises to the cytoplasm. The protein resides in the nucleus. The protein localises to the perinuclear region. It is found in the mitochondrion. The enzyme catalyses NADP(+) + H2O = phosphate + NAD(+). It carries out the reaction NADPH + H2O = phosphate + NADH. Its function is as follows. Phosphatase which catalyzes the conversion of NADP(+) to NAD(+) and of NADPH to NADH. Shows a small preference for NADPH over NADP(+). Component of the circadian clock or downstream effector of clock function. Exhibits a high amplitude circadian rhythm with maximal levels in early evening. In constant darkness or constant light, the amplitude of the rhythm decreases. This chain is Nocturnin, found in Xenopus laevis (African clawed frog).